Consider the following 214-residue polypeptide: MTQVWTVVVPVKRLGVAKSRLRGALPDQPHEALALALAVDTVSAVLACPVVADVLVVTDDPAVATETGMAGARVVPDRPAAGLNSAVRHGAATAGAGWIAGLTADLPALRPAELAAALSAARTGPTSRRYLPDAPGTGTVLLAAPPGVPLNPRFGGSSAAAHAASGALALLGDWPSLRRDVDTATDLAEAARLGLGPRTALLCGTAAPTAGRSV.

3 residues coordinate phosphoenolpyruvate: Thr-139, Gly-155, and Ser-158.

It belongs to the CofC family.

The enzyme catalyses phosphoenolpyruvate + GTP + H(+) = enolpyruvoyl-2-diphospho-5'-guanosine + diphosphate. It participates in cofactor biosynthesis; coenzyme F420 biosynthesis. In terms of biological role, guanylyltransferase that catalyzes the activation of phosphoenolpyruvate (PEP) as enolpyruvoyl-2-diphospho-5'-guanosine, via the condensation of PEP with GTP. It is involved in the biosynthesis of coenzyme F420, a hydride carrier cofactor. The polypeptide is Phosphoenolpyruvate guanylyltransferase (Salinispora arenicola (strain CNS-205)).